Consider the following 553-residue polypeptide: MQGPHLSLLLLLLATMGAVLQADTVEELTNTRGLIFLEDGVWPPSSPPEPLCLVAVRGEGDTSKASLTVVGGLHSYEHAFLEAVQESRWGPQDLATFGVCSTDSQTTLPALQRLGAWLGETGEQQLLVLHLAEVIWEPQLLLKFQEPPPGGASRWEQALLVLYPGPGPQVTVTGAGLQGTQSLCPTRDTRYLVLTVHFPAGAWSGSGLALTLQPSKEGATLTIAQLQAFLFGSDSRCFTRMTPTLVLLPPTGPTPQPAHGQLDTVPFPQPGLSLEPEDLPHSADPFLETLTRLVRALRGPLTRASNTRLALDPGALASFPQGLVNLSDPVALGRLLDGEEPLLLLLSPAAATVGEPMRLHSPTSAPWAAGLARRVAVELQAAASELRDLPGLPPTAPPLLSRLLALCPNDSRSAGDPLRALLLLKALQGLRAEWRGREGRGRAGRSKGTGTDGLCALRELSVDLRAERSVLIPETYQANNCQGACAWPQSDRNPRYGNHVVLLLKMQARGAALGRLPCCVPTAYTGKLLISLSEEHISAHHVPNMVATECGCR.

A signal peptide spans 1–22 (MQGPHLSLLLLLLATMGAVLQA). Residues 23–445 (DTVEELTNTR…GREGRGRAGR (423 aa)) constitute a propeptide that is removed on maturation. Residues N325 and N409 are each glycosylated (N-linked (GlcNAc...) asparagine). Disulfide bonds link C455–C519, C481–C550, and C485–C552.

The protein belongs to the TGF-beta family. In terms of assembly, homodimer; disulfide-linked. Preproprotein is proteolytically processed to generate N- and C-terminal cleavage products that homodimerize and associate to form a biologically active non-covalent complex. Binding of the non-covalent complex to AMHR2 induces dissociation of the pro-region from the mature C-terminal dimer. The N-terminal portion of the protein, despite having no intrinsic activity, has the role of amplifying the activity of the C-terminus. As to expression, mainly expressed in granulosa cells from preantral and small antral follicles.

It is found in the secreted. Its function is as follows. Plays an important role in several reproductive functions. Induces Muellerian duct regression during male fetal sexual differentiation and plays a role in Leydig cell differentiation and function. In female acts as a negative regulator of the primordial to primary follicle transition and decreases FSH sensitivity of growing follicles. AMH signals by binding to a specific type-II receptor, AMHR2, that heterodimerizes with type-I receptors (ACVR1 and BMPR1A), and recruiting SMAD proteins that are translocated to the nucleus to regulate target gene expression. This is Muellerian-inhibiting factor (Amh) from Rattus norvegicus (Rat).